Here is a 290-residue protein sequence, read N- to C-terminus: Glycine--tRNA ligase alpha subunit (290 aa).

Belongs to the class-II aminoacyl-tRNA synthetase family. In terms of assembly, tetramer of two alpha and two beta subunits.

It localises to the cytoplasm. It carries out the reaction tRNA(Gly) + glycine + ATP = glycyl-tRNA(Gly) + AMP + diphosphate. This Prochlorococcus marinus (strain NATL1A) protein is Glycine--tRNA ligase alpha subunit.